Here is a 334-residue protein sequence, read N- to C-terminus: Methionine adenosyltransferase 2 subunit beta (334 aa).

NADP(+) is bound by residues 37–40 (TGLL), 60–62 (FRR), 71–72 (NL), Cys-93, Arg-97, Tyr-159, and Leu-185. Phosphothreonine is present on Thr-309. Residues 319–334 (LWPFLIDKRWRQTVFH) form a required for interaction with MAT2A region.

This sequence belongs to the dTDP-4-dehydrorhamnose reductase family. MAT2B subfamily. In terms of assembly, heterotrimer; composed of a catalytic MAT2A homodimer that binds one regulatory MAT2B chain. Heterohexamer; composed of a central, catalytic MAT2A homotetramer flanked on either side by a regulatory MAT2B chain. NADP binding increases the affinity for MAT2A.

The protein operates within amino-acid biosynthesis; S-adenosyl-L-methionine biosynthesis; S-adenosyl-L-methionine from L-methionine: step 1/1. Regulatory subunit of S-adenosylmethionine synthetase 2, an enzyme that catalyzes the formation of S-adenosylmethionine from methionine and ATP. Regulates MAT2A catalytic activity by changing its kinetic properties, increasing its affinity for L-methionine. Can bind NADP (in vitro). The polypeptide is Methionine adenosyltransferase 2 subunit beta (MAT2B) (Bos taurus (Bovine)).